The sequence spans 257 residues: Nopaline permease ATP-binding protein P (257 aa).

The region spanning 8-253 (LVAEDVHKNF…PTSPRCRAFL (246 aa)) is the ABC transporter domain. 40 to 47 (GSSGSGKS) contributes to the ATP binding site.

This sequence belongs to the ABC transporter superfamily.

The protein resides in the cell inner membrane. Functionally, component of the nopaline active transport system probably consisting of four subunits: Q, M, P and T. This system is also capable of transporting octopine provided that catabolic functions are induced with nopaline. The chain is Nopaline permease ATP-binding protein P (nocP) from Agrobacterium fabrum (strain C58 / ATCC 33970) (Agrobacterium tumefaciens (strain C58)).